We begin with the raw amino-acid sequence, 487 residues long: Malonate-semialdehyde dehydrogenase 2 (487 aa).

NAD(+)-binding residues include phenylalanine 154, lysine 178, glutamate 181, arginine 182, and serine 231. Cysteine 286 (nucleophile) is an active-site residue. Glutamate 386 serves as a coordination point for NAD(+).

Belongs to the aldehyde dehydrogenase family. IolA subfamily. Homotetramer.

It carries out the reaction 3-oxopropanoate + NAD(+) + CoA + H2O = hydrogencarbonate + acetyl-CoA + NADH + H(+). The enzyme catalyses 2-methyl-3-oxopropanoate + NAD(+) + CoA + H2O = propanoyl-CoA + hydrogencarbonate + NADH + H(+). It functions in the pathway polyol metabolism; myo-inositol degradation into acetyl-CoA; acetyl-CoA from myo-inositol: step 7/7. Catalyzes the oxidation of malonate semialdehyde (MSA) and methylmalonate semialdehyde (MMSA) into acetyl-CoA and propanoyl-CoA, respectively. Is involved in a myo-inositol catabolic pathway. Bicarbonate, and not CO2, is the end-product of the enzymatic reaction. This Bacillus thuringiensis subsp. konkukian (strain 97-27) protein is Malonate-semialdehyde dehydrogenase 2.